The chain runs to 297 residues: Transcription factor bHLH129 (297 aa).

The interval 1–145 (MYPPNSSKST…SSSHQEHNSL (145 aa)) is disordered. Serine 35 bears the Phosphoserine mark. Low complexity predominate over residues 68-82 (SSIGFDSNASSSSSL). Residues 111–121 (PNGGYGGGGEQ) show a composition bias toward gly residues. Phosphoserine is present on serine 138. The bHLH domain maps to 239 to 289 (FATHPRSIAERERRTRISGKLKKLQELVPNMDKQTSYADMLDLAVEHIKGL).

In terms of assembly, homodimer.

The protein localises to the nucleus. This chain is Transcription factor bHLH129 (BHLH129), found in Arabidopsis thaliana (Mouse-ear cress).